The following is a 198-amino-acid chain: Charged multivesicular body protein 1a (198 aa).

Coiled-coil stretches lie at residues 7–41 and 176–198; these read QLKF…QQKN and GETS…ALRN. The tract at residues 171 to 198 is disordered; it reads GASALGETSARAQEKEDQLSRRLAALRN. Positions 187-197 match the MIT-interacting motif motif; it reads DQLSRRLAALR.

This sequence belongs to the SNF7 family. As to quaternary structure, probable peripherally associated component of the endosomal sorting required for transport complex III (ESCRT-III).

The protein resides in the cytoplasm. The protein localises to the endosome membrane. In terms of biological role, probable peripherally associated component of the endosomal sorting required for transport complex III (ESCRT-III) which is involved in multivesicular bodies (MVBs) formation and sorting of endosomal cargo proteins into MVBs. MVBs contain intraluminal vesicles (ILVs) that are generated by invagination and scission from the limiting membrane of the endosome and mostly are delivered to lysosomes enabling degradation of membrane proteins, such as stimulated growth factor receptors, lysosomal enzymes and lipids. This is Charged multivesicular body protein 1a (chmp1a) from Danio rerio (Zebrafish).